The following is a 109-amino-acid chain: U-scoloptoxin(16)-Ssd1a (109 aa).

The first 23 residues, 1–23 (MTTSATVIIMVLCVGSLVIFSEG), serve as a signal peptide directing secretion.

In terms of processing, contains 4 disulfide bonds. Expressed by the venom gland.

It localises to the secreted. The protein is U-scoloptoxin(16)-Ssd1a of Scolopendra dehaani (Thai centipede).